Here is a 421-residue protein sequence, read N- to C-terminus: Phosphoribosylamine--glycine ligase (421 aa).

Positions 108 to 314 constitute an ATP-grasp domain; that stretch reads KEIMVKYNVP…FAQNIDDIMM (207 aa). ATP is bound at residue 134–195; that stretch reads IEEQGAPIVV…EEFLDGEEFS (62 aa). 2 residues coordinate Mg(2+): Glu284 and Asn286.

It belongs to the GARS family. Requires Mg(2+) as cofactor. Mn(2+) serves as cofactor.

It catalyses the reaction 5-phospho-beta-D-ribosylamine + glycine + ATP = N(1)-(5-phospho-beta-D-ribosyl)glycinamide + ADP + phosphate + H(+). Its pathway is purine metabolism; IMP biosynthesis via de novo pathway; N(1)-(5-phospho-D-ribosyl)glycinamide from 5-phospho-alpha-D-ribose 1-diphosphate: step 2/2. This chain is Phosphoribosylamine--glycine ligase, found in Streptococcus pyogenes serotype M3 (strain SSI-1).